The chain runs to 27 residues: GGVGRCIYNCMNSGGGLNFIQCKTMCY.

Disulfide bonds link cysteine 6–cysteine 26 and cysteine 10–cysteine 22.

The protein belongs to the conotoxin L superfamily. In terms of tissue distribution, expressed by the venom duct.

It is found in the secreted. In vivo, intracranial injection, elicits scratching and grooming activity in mice. The chain is Conotoxin as14a from Conus cancellatus (Cancellate cone).